Consider the following 311-residue polypeptide: MTTRSPARPLIARRSTPAPTPAPHDPAPSRLSYRVTRLWLTPIFRKALHLGIPVFALFAAVTWYLGDETRVAELFEAVQEIRREVENRPEFRVNVLGIDGASDDVTEQVRAALALDLPISSFDLDLDELRGRLEALPPVRTADLRIQSGGYLAVRIDERIPAAVWLTHEGLSIVDGDGIFVAGFGTRELAAPLPLLGGEGANLAVPEALALMEASSILDDRVHGLVRMGERRWDVVLTNGSRILLPEIGAAAALDRVLALDDMGEILSRDVTAVDVRNPGRLTVRLTDAAMEELQRLQTLAAERPDGDTRG.

Positions Met-1 to Pro-28 are disordered. Residues Met-1–Lys-46 are Cytoplasmic-facing. Residues Ala-47 to Asp-67 traverse the membrane as a helical segment. Over Glu-68 to Gly-311 the chain is Periplasmic. One can recognise a POTRA domain in the interval Phe-91–Arg-159.

The protein belongs to the FtsQ/DivIB family. FtsQ subfamily.

The protein resides in the cell inner membrane. Its function is as follows. Essential cell division protein. The protein is Cell division protein FtsQ of Jannaschia sp. (strain CCS1).